Reading from the N-terminus, the 179-residue chain is Phospholipase A2 (179 aa).

Positions 1–21 are cleaved as a signal peptide; the sequence is MHALRSSVLALWLCLHVSVRA. Positions 22 to 39 are excised as a propeptide; the sequence is WMTYRSANGLDEYEPEDR. 3 residues coordinate Ca(2+): Trp-47, Gly-49, and Gly-51. 5 disulfide bridges follow: Cys-48–Cys-70, Cys-69–Cys-109, Cys-76–Cys-102, Cys-100–Cys-133, and Cys-142–Cys-150. The active site involves His-73. Residue Asp-74 coordinates Ca(2+). The active site involves Asp-103. Residue Asn-112 is glycosylated (N-linked (GlcNAc...) asparagine).

Ca(2+) is required as a cofactor. Expressed by the venom gland.

Its subcellular location is the secreted. The catalysed reaction is a 1,2-diacyl-sn-glycero-3-phosphocholine + H2O = a 1-acyl-sn-glycero-3-phosphocholine + a fatty acid + H(+). Its function is as follows. PLA2 catalyzes the calcium-dependent hydrolysis of the 2-acyl groups in 3-sn-phosphoglycerides. The sequence is that of Phospholipase A2 from Xylocopa appendiculata circumvolans (Japanese carpenter bee).